Reading from the N-terminus, the 322-residue chain is D-alanine--D-alanine ligase (322 aa).

The region spanning 108–311 is the ATP-grasp domain; it reads KEFYYNAELP…FPSLLDTLIE (204 aa). Position 136-192 (136-192) interacts with ATP; it reads IEDLGLPLVVKPACAGSSIGISLAHTEEELLAGINHARDCSAGAIMVEQFIKGRELT. Mg(2+) contacts are provided by D265, E278, and N280.

It belongs to the D-alanine--D-alanine ligase family. It depends on Mg(2+) as a cofactor. Mn(2+) is required as a cofactor.

The protein resides in the cytoplasm. It carries out the reaction 2 D-alanine + ATP = D-alanyl-D-alanine + ADP + phosphate + H(+). The protein operates within cell wall biogenesis; peptidoglycan biosynthesis. Cell wall formation. This Desulfotalea psychrophila (strain LSv54 / DSM 12343) protein is D-alanine--D-alanine ligase.